Reading from the N-terminus, the 395-residue chain is Formate-dependent phosphoribosylglycinamide formyltransferase (395 aa).

N(1)-(5-phospho-beta-D-ribosyl)glycinamide contacts are provided by residues E22 to L23 and E82. ATP-binding positions include R115, K156, S161 to Q166, E196 to I199, and E204. Positions R120 to L309 constitute an ATP-grasp domain. E268 and E280 together coordinate Mg(2+). Residues D287, K356, and R363–R364 contribute to the N(1)-(5-phospho-beta-D-ribosyl)glycinamide site.

It belongs to the PurK/PurT family. Homodimer.

It catalyses the reaction N(1)-(5-phospho-beta-D-ribosyl)glycinamide + formate + ATP = N(2)-formyl-N(1)-(5-phospho-beta-D-ribosyl)glycinamide + ADP + phosphate + H(+). It functions in the pathway purine metabolism; IMP biosynthesis via de novo pathway; N(2)-formyl-N(1)-(5-phospho-D-ribosyl)glycinamide from N(1)-(5-phospho-D-ribosyl)glycinamide (formate route): step 1/1. Involved in the de novo purine biosynthesis. Catalyzes the transfer of formate to 5-phospho-ribosyl-glycinamide (GAR), producing 5-phospho-ribosyl-N-formylglycinamide (FGAR). Formate is provided by PurU via hydrolysis of 10-formyl-tetrahydrofolate. The protein is Formate-dependent phosphoribosylglycinamide formyltransferase of Stenotrophomonas maltophilia (strain K279a).